The chain runs to 326 residues: Vitamin B12 import system permease protein BtuC (326 aa).

9 consecutive transmembrane segments (helical) span residues 15 to 35, 61 to 81, 88 to 108, 112 to 132, 146 to 166, 184 to 204, 240 to 260, 274 to 294, and 302 to 322; these read WLLCLSVLMLLALLLSLCAGE, LAVLLVGAALAISGAVMQALF, PGLLGVSNGAGVGLIAAVLLG, LPNWALGLCAIAGALIITLIL, LLAGVALGIICSALMTWAIYF, GGVDWRQSWLMLALIPVLLWI, GWMVGVSVALAGAIGFIGLVI, VLLPGCALAGASALLLADIVA, and ELPIGVVTATLGAPVFIWLLL.

It belongs to the binding-protein-dependent transport system permease family. FecCD subfamily. The complex is composed of two ATP-binding proteins (BtuD), two transmembrane proteins (BtuC) and a solute-binding protein (BtuF).

It localises to the cell inner membrane. In terms of biological role, part of the ABC transporter complex BtuCDF involved in vitamin B12 import. Involved in the translocation of the substrate across the membrane. The protein is Vitamin B12 import system permease protein BtuC of Shigella boydii serotype 18 (strain CDC 3083-94 / BS512).